A 185-amino-acid chain; its full sequence is Sarcoplasmic calcium-binding proteins I, III, and IV (185 aa).

4 consecutive EF-hand domains span residues 5-41, 57-92, 102-137, and 138-173; these read FQKQ…YKEV, SLED…TIAT, WCQN…FQLQ, and CADV…TSPA. The Ca(2+) site is built by Asp-19, Asn-21, Asp-23, Ser-25, Asp-30, Asp-70, Asn-72, Asp-74, Glu-81, Asp-115, Ser-117, Asp-119, and Glu-126.

Like parvalbumins, SCPs seem to be more abundant in fast contracting muscles, but no functional relationship can be established from this distribution. The sequence is that of Sarcoplasmic calcium-binding proteins I, III, and IV from Branchiostoma lanceolatum (Common lancelet).